We begin with the raw amino-acid sequence, 344 residues long: Transcription factor HHO3 (344 aa).

Disordered regions lie at residues 90–122 (KWSS…DKKK) and 156–212 (AFQP…KQRR). The segment covering 97-106 (DETDKDEEAE) has biased composition (acidic residues). Residues 178–188 (TPTSTTTTSST) are compositionally biased toward low complexity. The HTH myb-type domain maps to 206–266 (SNRKQRRCWS…HLQKYRLHTR (61 aa)). Residues 237 to 262 (PKQIRDLMKVDGLTNDEVKSHLQKYR) constitute a DNA-binding region (H-T-H motif). Positions 306-344 (PVATQPPQSSTSGERSNRGCKSPATSSTTTHTPHLLPLS) are disordered. Residues 310-319 (QPPQSSTSGE) show a composition bias toward polar residues. Residues 330–344 (TSSTTTHTPHLLPLS) are compositionally biased toward low complexity.

The protein localises to the nucleus. Probable transcription factor involved in phosphate signaling in roots. The polypeptide is Transcription factor HHO3 (Arabidopsis thaliana (Mouse-ear cress)).